A 104-amino-acid chain; its full sequence is Integration host factor subunit beta (104 aa).

Belongs to the bacterial histone-like protein family. Heterodimer of an alpha and a beta chain.

In terms of biological role, this protein is one of the two subunits of integration host factor, a specific DNA-binding protein that functions in genetic recombination as well as in transcriptional and translational control. The sequence is that of Integration host factor subunit beta (ihfB) from Xylella fastidiosa (strain 9a5c).